A 481-amino-acid polypeptide reads, in one-letter code: Bestrophin homolog 17 (481 aa).

Residues 1–27 lie on the Cytoplasmic side of the membrane; that stretch reads MTVSYQLDVSSGNPLLFLRLLGRWRGS. The chain crosses the membrane as a helical span at residues 28–48; that stretch reads IWKSVVGDLFVWLLFYYAIYF. At 49–95 the chain is on the extracellular side; sequence AYRYAFSKQLQTVFEEISIHTDDRMKYLPLTFMLGFFVTTVFERWRS. Residues 96–116 form a helical membrane-spanning segment; that stretch reads ALNVMPFIESVALSVAVLLPG. The Cytoplasmic portion of the chain corresponds to 117–230; sequence KGREDRLTRR…AMETLIKFDA (114 aa). Residues 231 to 251 traverse the membrane as a helical segment; it reads IPIPIAYPQVVFLAVRVYFAI. Residues 252-274 are Extracellular-facing; that stretch reads CLVSRQFLISDMKSKTQMDWPVP. The helical transmembrane segment at 275–295 threads the bilayer; that stretch reads IMTVLEFIFVIGWMKVAEVLL. At 296 to 481 the chain is on the cytoplasmic side; it reads NPLGEDDDDF…SSEESVDKKG (186 aa). The segment at 427–481 is disordered; that stretch reads AGMLNKSTQPDRPTMETVSEEHEPSHFYRGDRVHSSDSGLSKTQQSSEESVDKKG. A compositionally biased stretch (basic and acidic residues) spans 445–461; that stretch reads SEEHEPSHFYRGDRVHS. Positions 462–474 are enriched in polar residues; sequence SDSGLSKTQQSSE.

It belongs to the anion channel-forming bestrophin (TC 1.A.46) family. Calcium-sensitive chloride channel subfamily. As to quaternary structure, forms oligomers.

It is found in the cell membrane. Functionally, forms chloride channels. In Caenorhabditis elegans, this protein is Bestrophin homolog 17.